A 407-amino-acid polypeptide reads, in one-letter code: SERPINE1 mRNA-binding protein 1 (407 aa).

Ser25 bears the Phosphoserine mark. A disordered region spans residues Ala33 to Val227. Over residues Ala51–Lys68 the composition is skewed to low complexity. Lys52 is subject to N6-acetyllysine; alternate. Lys52 is covalently cross-linked (Glycyl lysine isopeptide (Lys-Gly) (interchain with G-Cter in SUMO1); alternate). Lys68 bears the N6-acetyllysine mark. 3 stretches are compositionally biased toward basic and acidic residues: residues Leu70 to Asn80, Val89 to Asp114, and Lys122 to Ile162. A Glycyl lysine isopeptide (Lys-Gly) (interchain with G-Cter in SUMO1); alternate cross-link involves residue Lys102. Residue Lys102 forms a Glycyl lysine isopeptide (Lys-Gly) (interchain with G-Cter in SUMO2) linkage. Residue Lys102 forms a Glycyl lysine isopeptide (Lys-Gly) (interchain with G-Cter in SUMO2); alternate linkage. Residues Lys122 and Lys140 each carry the N6-acetyllysine modification. Gly residues predominate over residues Gly164–Gly182. Residues Arg165 and Arg188 each carry the omega-N-methylarginine modification. The span at Asp183–Ser199 shows a compositional bias: basic and acidic residues. A phosphoserine mark is found at Ser197, Ser199, Ser203, Ser205, and Ser208. At Lys211 the chain carries N6-acetyllysine; alternate. Lys211 participates in a covalent cross-link: Glycyl lysine isopeptide (Lys-Gly) (interchain with G-Cter in SUMO2); alternate. Position 216 is an omega-N-methylarginine (Arg216). Ser221 bears the Phosphoserine mark. Phosphothreonine is present on Thr226. A Glycyl lysine isopeptide (Lys-Gly) (interchain with G-Cter in SUMO1); alternate cross-link involves residue Lys228. A Glycyl lysine isopeptide (Lys-Gly) (interchain with G-Cter in SUMO2); alternate cross-link involves residue Lys228. Phosphoserine is present on Ser234. Polar residues predominate over residues Ile242 to Glu256. Disordered regions lie at residues Ile242–Glu291 and Ser327–Ala407. The span at Gly261–Asn274 shows a compositional bias: basic and acidic residues. Lys280 is covalently cross-linked (Glycyl lysine isopeptide (Lys-Gly) (interchain with G-Cter in SUMO1); alternate). Lys280 is covalently cross-linked (Glycyl lysine isopeptide (Lys-Gly) (interchain with G-Cter in SUMO2)). Lys280 is covalently cross-linked (Glycyl lysine isopeptide (Lys-Gly) (interchain with G-Cter in SUMO2); alternate). Composition is skewed to basic and acidic residues over residues Glu281 to Glu291 and Ser327 to His341. Lys328 carries the post-translational modification N6-acetyllysine. Ser329 carries the post-translational modification Phosphoserine. Residues Gly362–Gly371 show a composition bias toward gly residues. Residues Arg363, Arg366, and Arg369 each carry the omega-N-methylarginine modification. Phosphoserine is present on residues Ser391 and Ser393.

This sequence belongs to the SERBP1-HABP4 family. In terms of assembly, associates with mature 80S ribosomes. Interacts with EEF2/eEF2; interaction sequesters EEF2/eEF2 at the A-site of the ribosome, thereby blocking the interaction sites of the mRNA-tRNA complex, promoting ribosome stabilization and hibernation. Interacts with SPIN1. Interacts with CHD3 and TDRD3. Interacts with ZDHHC17 (via ANK repeats). In terms of processing, phosphorylation by MTOR inhibits SERBP1 and relieves ribosome hibernation.

In terms of biological role, ribosome-binding protein that promotes ribosome hibernation, a process during which ribosomes are stabilized in an inactive state and preserved from proteasomal degradation. Acts via its association with EEF2/eEF2 factor, sequestering EEF2/eEF2 at the A-site of the ribosome and promoting ribosome stabilization and storage in an inactive state. May also play a role in the regulation of mRNA stability: binds to the 3'-most 134 nt of the SERPINE1/PAI1 mRNA, a region which confers cyclic nucleotide regulation of message decay. Seems to play a role in PML-nuclear bodies formation. In Oryctolagus cuniculus (Rabbit), this protein is SERPINE1 mRNA-binding protein 1.